The following is a 156-amino-acid chain: Ribonuclease H (156 aa).

The 142-residue stretch at Met1 to Asn142 folds into the RNase H type-1 domain. 4 residues coordinate Mg(2+): Asp10, Glu48, Asp70, and Asp134.

Belongs to the RNase H family. As to quaternary structure, monomer. It depends on Mg(2+) as a cofactor.

The protein resides in the cytoplasm. The enzyme catalyses Endonucleolytic cleavage to 5'-phosphomonoester.. In terms of biological role, endonuclease that specifically degrades the RNA of RNA-DNA hybrids. This is Ribonuclease H from Photorhabdus luminescens (Xenorhabdus luminescens).